A 439-amino-acid chain; its full sequence is Secreted aspartic protease LUC8 (439 aa).

Residues 1–20 form the signal peptide; that stretch reads MMHAFHHLAVLLIGSLPASA. 2 N-linked (GlcNAc...) asparagine glycosylation sites follow: N33 and N54. The region spanning 51 to 435 is the Peptidase A1 domain; the sequence is YLFNITVGTP…DFETQSFGLA (385 aa). Residue D69 is part of the active site. N-linked (GlcNAc...) asparagine glycosylation is found at N110, N126, N179, and N289. D300 is an active-site residue. Residues N329 and N373 are each glycosylated (N-linked (GlcNAc...) asparagine). Residues C355 and C391 are joined by a disulfide bond.

It belongs to the peptidase A1 family.

Its subcellular location is the secreted. Its function is as follows. Secreted aspartic protease; part of the gene cluster that mediates the biosynthesis of the mycotoxin lucilactaene and the lucilactaene-related compound NG-391 that act as cell cycle inhibitors with potent growth inhibitory activity against malarial parasites, moderate growth inhibitory activity against cancer cells, and no activity against bacteria and fungi. Within the cluster, LUC7 and LUC8 encode proteins which are not commonly involved in the biosynthesis of secondary metabolites and are not essential for lucilactaene biosynthesis. The sequence is that of Secreted aspartic protease LUC8 from Fusarium sp.